The chain runs to 163 residues: Inorganic pyrophosphatase (163 aa).

E9 is a Mg(2+) binding site. Residues K17, R31, and Y43 each coordinate substrate. Residues D53, D58, D85, and D90 each coordinate Mg(2+). D90 serves as the catalytic Proton acceptor. Residue Y127 participates in substrate binding.

This sequence belongs to the PPase family. In terms of assembly, homohexamer. Mg(2+) serves as cofactor.

The protein resides in the cytoplasm. It catalyses the reaction diphosphate + H2O = 2 phosphate + H(+). In terms of biological role, catalyzes the hydrolysis of inorganic pyrophosphate (PPi) forming two phosphate ions. This Leifsonia xyli subsp. xyli (strain CTCB07) protein is Inorganic pyrophosphatase.